A 423-amino-acid polypeptide reads, in one-letter code: Glycine amidinotransferase, mitochondrial (423 aa).

Residues 1–43 (MLRVRCLRGGSRGAEALHYIGSRLGRTVTGWVQRTFQSTQAAT) constitute a mitochondrion transit peptide. Serine 46 and serine 49 each carry phosphoserine. Aspartate 170 lines the arginine pocket. Active-site residues include aspartate 254 and histidine 303. 4 residues coordinate arginine: aspartate 305, arginine 322, serine 354, and serine 355. Lysine 385 carries the N6-acetyllysine modification. Cysteine 407 (amidino-cysteine intermediate) is an active-site residue.

It belongs to the amidinotransferase family. Homodimer.

It is found in the mitochondrion inner membrane. The catalysed reaction is L-arginine + glycine = guanidinoacetate + L-ornithine. It carries out the reaction 4-aminobutanoate + L-arginine = 4-guanidinobutanoate + L-ornithine. It catalyses the reaction beta-alanine + L-arginine = 3-guanidinopropanoate + L-ornithine. The enzyme catalyses taurine + L-arginine = taurocyamine + L-ornithine. The protein operates within amine and polyamine biosynthesis; creatine biosynthesis; creatine from L-arginine and glycine: step 1/2. Its function is as follows. Transamidinase that catalyzes the transfer of the amidino group of L-arginine onto the amino moiety of acceptor metabolites such as glycine, beta-alanine, gamma-aminobutyric acid (GABA) and taurine yielding the corresponding guanidine derivatives. Catalyzes the rate-limiting step of creatine biosynthesis, namely the transfer of the amidino group from L-arginine to glycine to generate guanidinoacetate, which is then methylated by GAMT to form creatine. Provides creatine as a source for ATP generation in tissues with high energy demands, in particular skeletal muscle, heart and brain. This is Glycine amidinotransferase, mitochondrial (GATM) from Bos taurus (Bovine).